We begin with the raw amino-acid sequence, 73 residues long: N-terminal-borealin-like protein (73 aa).

It belongs to the borealin family. As to quaternary structure, component of the aurora kinase complex composed of at least BIR1, BNL1, IPL1 and SLI15.

Its subcellular location is the nucleus. The protein localises to the cytoplasm. It is found in the cytoskeleton. It localises to the spindle. Component of the aurora kinase complex, also called chromosomal passenger complex (CPC), essential for chromosome segregation and metaphase chromosome alignment. Mediates the SLI15-BIR1 interaction within the CPC. This chain is N-terminal-borealin-like protein (NBL1), found in Saccharomyces cerevisiae (strain ATCC 204508 / S288c) (Baker's yeast).